The sequence spans 308 residues: GATA transcription factor 9 (308 aa).

Positions 34 to 57 are disordered; that stretch reads DDGLNTLPDSSTLSTGTLTDSSNS. The span at 39–57 shows a compositional bias: low complexity; it reads TLPDSSTLSTGTLTDSSNS. The short motif at 142–149 is the Nuclear localization signal element; it reads KARSKRSR. Residues 193–247 form a GATA-type zinc finger; sequence SGGGRRCLHCATEKTPQWRTGPMGPKTLCNACGVRYKSGRLVPEYRPASSPTFVM.

It belongs to the type IV zinc-finger family. Class A subfamily.

Its subcellular location is the nucleus. In terms of biological role, transcriptional activator that specifically binds 5'-GATA-3' or 5'-GAT-3' motifs within gene promoters. May be involved in the regulation of some light-responsive genes. This chain is GATA transcription factor 9 (GATA9), found in Arabidopsis thaliana (Mouse-ear cress).